We begin with the raw amino-acid sequence, 275 residues long: 3-methyl-2-oxobutanoate hydroxymethyltransferase (275 aa).

Mg(2+) is bound by residues aspartate 44 and aspartate 83. Residues aspartate 44–serine 45, aspartate 83, and lysine 113 contribute to the 3-methyl-2-oxobutanoate site. Position 115 (glutamate 115) interacts with Mg(2+). Glutamate 182 functions as the Proton acceptor in the catalytic mechanism.

The protein belongs to the PanB family. In terms of assembly, homodecamer; pentamer of dimers. Mg(2+) is required as a cofactor.

The protein resides in the cytoplasm. It carries out the reaction 3-methyl-2-oxobutanoate + (6R)-5,10-methylene-5,6,7,8-tetrahydrofolate + H2O = 2-dehydropantoate + (6S)-5,6,7,8-tetrahydrofolate. Its pathway is cofactor biosynthesis; (R)-pantothenate biosynthesis; (R)-pantoate from 3-methyl-2-oxobutanoate: step 1/2. Functionally, catalyzes the reversible reaction in which hydroxymethyl group from 5,10-methylenetetrahydrofolate is transferred onto alpha-ketoisovalerate to form ketopantoate. This chain is 3-methyl-2-oxobutanoate hydroxymethyltransferase, found in Enterococcus faecalis (strain ATCC 700802 / V583).